A 290-amino-acid polypeptide reads, in one-letter code: Putative neuropeptide Y receptor type 6 (290 aa).

The Extracellular segment spans residues 1 to 39 (MEVSLNHPASNTTSTKNNNSAFFYFESCQPPSPALLLLC). Asparagine 11 carries N-linked (GlcNAc...) asparagine glycosylation. A helical transmembrane segment spans residues 40-60 (IAYTVVLIVGLFGNLSLIIII). Residues 61 to 83 (FKKQRKAQNFTSILIANLSLSDT) are Cytoplasmic-facing. A helical membrane pass occupies residues 84–104 (LVCVMCIHFTIIYTLMDHWIF). Residues 105 to 111 (GDTMCRL) are Extracellular-facing. A disulfide bridge links cysteine 109 with cysteine 196. A helical membrane pass occupies residues 112–132 (TSYVQSVSISVSIFSLVFTAV). Residues 133-150 (ERYQLIVNPRGWKPSVTH) lie on the Cytoplasmic side of the membrane. The helical transmembrane segment at 151-171 (AYWGITLIWLFSLLLSIPFFL) threads the bilayer. The Extracellular portion of the chain corresponds to 172-206 (SYHLTDEPFRNLSLPTDLYTHQVACVENWPSKKDR). A helical membrane pass occupies residues 207-227 (LLFTTSLFLLQYFVPLGFILI). The Cytoplasmic portion of the chain corresponds to 228–258 (CYLKIVICLRRRNAKVDKKKENEGRLNENKR). The helical transmembrane segment at 259-279 (INTMLISIVVTFGACWLPRIS) threads the bilayer. Residues 280–290 (SMSSLTGIMRC) are Extracellular-facing.

The protein belongs to the G-protein coupled receptor 1 family. In terms of tissue distribution, expressed in heart, skeletal muscle, gastrointestinal tissues, spleen, brain and adrenal glands.

The protein resides in the membrane. When expressed, is unable to bind pancreatic polypeptide (PP), neuropeptide Y (NPY), or peptide YY (PYY), suggesting that either it is functionally inactive or that it may have acquired a pancreatic polypeptide-independent function. The protein is Putative neuropeptide Y receptor type 6 (NPY6R) of Homo sapiens (Human).